The primary structure comprises 268 residues: Tryptophan synthase alpha chain (268 aa).

Catalysis depends on proton acceptor residues glutamate 49 and aspartate 60.

Belongs to the TrpA family. Tetramer of two alpha and two beta chains.

It catalyses the reaction (1S,2R)-1-C-(indol-3-yl)glycerol 3-phosphate + L-serine = D-glyceraldehyde 3-phosphate + L-tryptophan + H2O. It participates in amino-acid biosynthesis; L-tryptophan biosynthesis; L-tryptophan from chorismate: step 5/5. The alpha subunit is responsible for the aldol cleavage of indoleglycerol phosphate to indole and glyceraldehyde 3-phosphate. The sequence is that of Tryptophan synthase alpha chain from Xanthomonas oryzae pv. oryzae (strain PXO99A).